A 395-amino-acid chain; its full sequence is F-box/kelch-repeat protein At3g13680 (395 aa).

Residues 1-47 (MTTMGDLPGDLVEEILSRVPLTSLRAIRSTCQKWNSLSKSQICGRKA) enclose the F-box domain. Kelch repeat units follow at residues 154-202 (ILRI…SLKG), 210-256 (KKET…VSLA), 265-314 (VLYQ…FIDE), and 337-383 (IVYI…LVQL).

This chain is F-box/kelch-repeat protein At3g13680, found in Arabidopsis thaliana (Mouse-ear cress).